The chain runs to 149 residues: Transcriptional repressor NrdR (149 aa).

The segment at 3–34 is a zinc-finger region; the sequence is CPFCTAEETKVIDSRLAADGYQIRRRRECIGC. One can recognise an ATP-cone domain in the interval 49 to 139; that stretch reads PYIIKNNGNR…VYLSFDDIEE (91 aa).

The protein belongs to the NrdR family. It depends on Zn(2+) as a cofactor.

In terms of biological role, negatively regulates transcription of bacterial ribonucleotide reductase nrd genes and operons by binding to NrdR-boxes. The sequence is that of Transcriptional repressor NrdR from Haemophilus ducreyi (strain 35000HP / ATCC 700724).